A 293-amino-acid chain; its full sequence is Ribosomal protein L11 methyltransferase (293 aa).

S-adenosyl-L-methionine is bound by residues Thr-145, Gly-166, Asp-188, and Asn-230.

Belongs to the methyltransferase superfamily. PrmA family.

The protein resides in the cytoplasm. The enzyme catalyses L-lysyl-[protein] + 3 S-adenosyl-L-methionine = N(6),N(6),N(6)-trimethyl-L-lysyl-[protein] + 3 S-adenosyl-L-homocysteine + 3 H(+). Its function is as follows. Methylates ribosomal protein L11. The sequence is that of Ribosomal protein L11 methyltransferase from Klebsiella pneumoniae subsp. pneumoniae (strain ATCC 700721 / MGH 78578).